The following is a 307-amino-acid chain: Ribonuclease Z (307 aa).

The Zn(2+) site is built by H63, H65, D67, H68, H143, D213, and H271. D67 serves as the catalytic Proton acceptor.

This sequence belongs to the RNase Z family. In terms of assembly, homodimer. Zn(2+) serves as cofactor.

It carries out the reaction Endonucleolytic cleavage of RNA, removing extra 3' nucleotides from tRNA precursor, generating 3' termini of tRNAs. A 3'-hydroxy group is left at the tRNA terminus and a 5'-phosphoryl group is left at the trailer molecule.. Functionally, zinc phosphodiesterase, which displays some tRNA 3'-processing endonuclease activity. Probably involved in tRNA maturation, by removing a 3'-trailer from precursor tRNA. This chain is Ribonuclease Z, found in Lactococcus lactis subsp. cremoris (strain MG1363).